The primary structure comprises 682 residues: DNA ligase (682 aa).

NAD(+) is bound by residues 42-46 (DAAYD), 88-89 (SL), and glutamate 121. Lysine 123 acts as the N6-AMP-lysine intermediate in catalysis. Arginine 144, glutamate 180, lysine 291, and lysine 315 together coordinate NAD(+). Residues cysteine 409, cysteine 412, cysteine 427, and cysteine 433 each contribute to the Zn(2+) site. The region spanning 601–682 (AAGGALAGKT…FRSLAGLPPG (82 aa)) is the BRCT domain.

It belongs to the NAD-dependent DNA ligase family. LigA subfamily. Requires Mg(2+) as cofactor. Mn(2+) serves as cofactor.

It catalyses the reaction NAD(+) + (deoxyribonucleotide)n-3'-hydroxyl + 5'-phospho-(deoxyribonucleotide)m = (deoxyribonucleotide)n+m + AMP + beta-nicotinamide D-nucleotide.. Its function is as follows. DNA ligase that catalyzes the formation of phosphodiester linkages between 5'-phosphoryl and 3'-hydroxyl groups in double-stranded DNA using NAD as a coenzyme and as the energy source for the reaction. It is essential for DNA replication and repair of damaged DNA. The protein is DNA ligase of Acidiphilium cryptum (strain JF-5).